The primary structure comprises 945 residues: Leucine--tRNA ligase (945 aa).

A 'HIGH' region motif is present at residues 43-53; it reads PYPNGAIHIGH. Residues 638-642 carry the 'KMSKS' region motif; the sequence is KMSKS. Residue K641 participates in ATP binding.

The protein belongs to the class-I aminoacyl-tRNA synthetase family.

The protein resides in the cytoplasm. The catalysed reaction is tRNA(Leu) + L-leucine + ATP = L-leucyl-tRNA(Leu) + AMP + diphosphate. The chain is Leucine--tRNA ligase from Pyrobaculum aerophilum (strain ATCC 51768 / DSM 7523 / JCM 9630 / CIP 104966 / NBRC 100827 / IM2).